Reading from the N-terminus, the 877-residue chain is Alanine--tRNA ligase (877 aa).

Residues His-563, His-567, Cys-667, and His-671 each coordinate Zn(2+).

The protein belongs to the class-II aminoacyl-tRNA synthetase family. Zn(2+) serves as cofactor.

It localises to the cytoplasm. It catalyses the reaction tRNA(Ala) + L-alanine + ATP = L-alanyl-tRNA(Ala) + AMP + diphosphate. Its function is as follows. Catalyzes the attachment of alanine to tRNA(Ala) in a two-step reaction: alanine is first activated by ATP to form Ala-AMP and then transferred to the acceptor end of tRNA(Ala). Also edits incorrectly charged Ser-tRNA(Ala) and Gly-tRNA(Ala) via its editing domain. This is Alanine--tRNA ligase from Cytophaga hutchinsonii (strain ATCC 33406 / DSM 1761 / CIP 103989 / NBRC 15051 / NCIMB 9469 / D465).